The chain runs to 254 residues: uncharacterized protein (254 aa).

A signal peptide spans 1–22 (MKRLKKIVLCISFLFLTIFIGG). A lipid anchor (N-palmitoyl cysteine) is attached at Cys-23. The S-diacylglycerol cysteine moiety is linked to residue Cys-23.

The protein belongs to the staphylococcal tandem lipoprotein family.

The protein localises to the cell membrane. This is an uncharacterized protein from Staphylococcus aureus (strain MSSA476).